The sequence spans 480 residues: MEAAMNNHDGDCCKSGPGYATPLLAMSGPREKLIYVAAIYTGTGQAKPDYLATVDVEPSSSTYSSVIHRLPMPYLEDELHHSGWNSCSSCYGDSSCERRYLILPSLLSGRIYVIDTKTNPREPSLHKFVDPAEVLEKTGLAYPHQPHCLASGDVLVSCLGDEDGNAEGSGFLLLDSEFNIKGRWEKDGNSPLYGYDFWYQPRHKTMISTSWGAPAAFTKGFDLKDVSDGLYGKHLHVYSWPQGELKQILDLGDTGLLPLEVRFLHEPDKATGFAGCALSSTLVRFFKNDDETWSHEVAISVEPLKVENWILPEMPGLITDFLISLDDRFLYCSNWLHGDIRQYNIEDPKTPVLTGQIHVGGLVQKGSLVLALGEEGKAFQFDVPKIKGQRLRGGPQMFQLSLDGKRLYVTNSLFSVWDRQFYPELVEKGSHMLQIDVDTDKGGLSINPNFFVDFGTEPDGPSLAHEMRYPGGDCTSDIWV.

Selenite contacts are provided by Cys-12 and Cys-13.

It belongs to the selenium-binding protein family. Expressed in young seedlings, mostly in roots.

The protein is Selenium-binding protein 3 (SBP3) of Arabidopsis thaliana (Mouse-ear cress).